We begin with the raw amino-acid sequence, 81 residues long: UPF0180 protein ABC2430 (81 aa).

This sequence belongs to the UPF0180 family.

This chain is UPF0180 protein ABC2430, found in Shouchella clausii (strain KSM-K16) (Alkalihalobacillus clausii).